Reading from the N-terminus, the 491-residue chain is Limb region 1 homolog-like protein (491 aa).

Over 1-20 the chain is Extracellular; it reads METEDVTVREQIFHDRVRET. The chain crosses the membrane as a helical span at residues 21–41; it reads IICVLLFICLYILSHFILTHF. The Cytoplasmic portion of the chain corresponds to 42–59; it reads KKSAEFVTDDIEDATVNK. A helical membrane pass occupies residues 60-80; the sequence is IALWLCTFTLSVAVCAVLLLP. Topologically, residues 81-111 are extracellular; the sequence is ISILSNEVLLTFPHSYYMQWLNGSLIRGLWN. The helical transmembrane segment at 112-132 threads the bilayer; the sequence is LVFLFSNLSLVFLMPFAYFFT. Over 133-152 the chain is Cytoplasmic; it reads ESEGFAGSKKGVMARVYETA. Residues 153–173 traverse the membrane as a helical segment; sequence VMLLLLSLLVLGIVWVASALL. Residues 174–192 lie on the Extracellular side of the membrane; that stretch reads HHNTARESLYDLWEYYLPY. Residues 193–213 form a helical membrane-spanning segment; it reads LYSGISLFGVLLLLLCTPFGL. Topologically, residues 214 to 292 are cytoplasmic; it reads SRMFSVTGSL…RKRASPWQRN (79 aa). The chain crosses the membrane as a helical span at residues 293-313; sequence LVYPVAMLLLLALTAVSVLMV. The Extracellular portion of the chain corresponds to 314-346; that stretch reads CFHVLELLFDESAMPRGMEDPHLGLASFSMLGS. Residues 347 to 367 form a helical membrane-spanning segment; that stretch reads LGAAVQVVIILYLMVSSVVGF. Over 368-384 the chain is Cytoplasmic; that stretch reads YSSPLFTGLLPRAQDTT. Residues 385–405 form a helical membrane-spanning segment; that stretch reads LTQIIGNCVSLLILSSALPVF. Residues 406 to 427 are Extracellular-facing; it reads SRTLGITKFDLLGDFGRHDWLG. Residues 428–448 traverse the membrane as a helical segment; that stretch reads SFHIVFLYNMLFAGLTSACLI. Topologically, residues 449–491 are cytoplasmic; that stretch reads NTVTWALQRELIRAFGLHRLPLTVSRSTIPLKLLLANGLSKIH.

It belongs to the LIMR family. Dimer. Can also form higher oligomers.

It is found in the cell membrane. It localises to the endoplasmic reticulum membrane. In terms of biological role, may play a role in lymphocyte development by negatively regulating the canonical Wnt signaling pathway. May act as a LCN1 receptor. This is Limb region 1 homolog-like protein (lmbr1l) from Danio rerio (Zebrafish).